A 141-amino-acid chain; its full sequence is Protein nfe1 (141 aa).

To the N-terminal of nitrogenase iron protein (NifH). Has lost the ATP-binding site.

Its function is as follows. Responsible for the nodulation efficiency and competitive ability of strain GR4 on alfalfa roots. This Rhizobium meliloti (Ensifer meliloti) protein is Protein nfe1 (nfe1).